The chain runs to 281 residues: NADPH-dependent 7-cyano-7-deazaguanine reductase (281 aa).

87–89 provides a ligand contact to substrate; it reads IES. 89–90 serves as a coordination point for NADPH; that stretch reads SK. The active-site Thioimide intermediate is the Cys-188. Residue Asp-195 is the Proton donor of the active site. 227-228 serves as a coordination point for substrate; sequence HE. 256–257 provides a ligand contact to NADPH; it reads RG. Residues 261-281 are disordered; it reads INPYRSTEQAKPDHNHRMARQ. Residues 268 to 281 show a composition bias toward basic and acidic residues; that stretch reads EQAKPDHNHRMARQ.

The protein belongs to the GTP cyclohydrolase I family. QueF type 2 subfamily. In terms of assembly, homodimer.

The protein resides in the cytoplasm. It catalyses the reaction 7-aminomethyl-7-carbaguanine + 2 NADP(+) = 7-cyano-7-deazaguanine + 2 NADPH + 3 H(+). It functions in the pathway tRNA modification; tRNA-queuosine biosynthesis. In terms of biological role, catalyzes the NADPH-dependent reduction of 7-cyano-7-deazaguanine (preQ0) to 7-aminomethyl-7-deazaguanine (preQ1). This Vibrio vulnificus (strain YJ016) protein is NADPH-dependent 7-cyano-7-deazaguanine reductase.